A 217-amino-acid polypeptide reads, in one-letter code: MEHSAWHDLIKKELPEGYFAQINHFMNEVYAQGVIYPPRDKVFNAIQTTPLDKVKVVIIGQDPYHGPNQAQGLSFSVPDQVPAPPSLQNILKELADDIGQKQSHDLTSWAKQGVLLLNASLTVPEHQANAHANGIWEPFTDAVIKVVNQKETPVVFILWGGFARKKKALITNSIHHIIESPHPSPLSAHRGFFGSKPFSQTNHFLVAQGLEPIDWLK.

Asp-62 (proton acceptor) is an active-site residue.

This sequence belongs to the uracil-DNA glycosylase (UDG) superfamily. UNG family.

Its subcellular location is the cytoplasm. The enzyme catalyses Hydrolyzes single-stranded DNA or mismatched double-stranded DNA and polynucleotides, releasing free uracil.. Excises uracil residues from the DNA which can arise as a result of misincorporation of dUMP residues by DNA polymerase or due to deamination of cytosine. This Streptococcus mutans serotype c (strain ATCC 700610 / UA159) protein is Uracil-DNA glycosylase.